A 491-amino-acid polypeptide reads, in one-letter code: Protein SET DOMAIN GROUP 40 (491 aa).

One can recognise an SET domain in the interval 36 to 278 (HSLSVSDFPD…LGEQVLLCYG (243 aa)).

Belongs to the class V-like SAM-binding methyltransferase superfamily.

The chain is Protein SET DOMAIN GROUP 40 (SDG40) from Arabidopsis thaliana (Mouse-ear cress).